The primary structure comprises 32 residues: Cytochrome b6-f complex subunit 7 (32 aa).

The helical transmembrane segment at 5–25 (IFGTAAIFWVLIPAGLLGGAL) threads the bilayer.

This sequence belongs to the PetM family. The 4 large subunits of the cytochrome b6-f complex are cytochrome b6, subunit IV (17 kDa polypeptide, PetD), cytochrome f and the Rieske protein, while the 4 small subunits are PetG, PetL, PetM and PetN. The complex functions as a dimer.

Its subcellular location is the cellular thylakoid membrane. Its function is as follows. Component of the cytochrome b6-f complex, which mediates electron transfer between photosystem II (PSII) and photosystem I (PSI), cyclic electron flow around PSI, and state transitions. The protein is Cytochrome b6-f complex subunit 7 of Prochlorococcus marinus (strain SARG / CCMP1375 / SS120).